The sequence spans 125 residues: Small ribosomal subunit protein uS13 (125 aa).

The tract at residues 92–125 (RRSLPVRGQRTQTNARTRKGKRKTVAGKKKATKK) is disordered. The segment covering 107–125 (RTRKGKRKTVAGKKKATKK) has biased composition (basic residues).

This sequence belongs to the universal ribosomal protein uS13 family. Part of the 30S ribosomal subunit. Forms a loose heterodimer with protein S19. Forms two bridges to the 50S subunit in the 70S ribosome.

Its function is as follows. Located at the top of the head of the 30S subunit, it contacts several helices of the 16S rRNA. In the 70S ribosome it contacts the 23S rRNA (bridge B1a) and protein L5 of the 50S subunit (bridge B1b), connecting the 2 subunits; these bridges are implicated in subunit movement. Contacts the tRNAs in the A and P-sites. The polypeptide is Small ribosomal subunit protein uS13 (Chlorobium limicola (strain DSM 245 / NBRC 103803 / 6330)).